The sequence spans 371 residues: tRNA-specific 2-thiouridylase MnmA (371 aa).

Residues 13–20 (GMSGGVDS) and methionine 39 contribute to the ATP site. Residues 99–101 (NPD) form an interaction with target base in tRNA region. The active-site Nucleophile is the cysteine 104. A disulfide bond links cysteine 104 and cysteine 200. Glycine 128 provides a ligand contact to ATP. The interval 150–152 (KDQ) is interaction with tRNA. Cysteine 200 acts as the Cysteine persulfide intermediate in catalysis. Positions 308 to 309 (RY) are interaction with tRNA.

Belongs to the MnmA/TRMU family.

The protein localises to the cytoplasm. The catalysed reaction is S-sulfanyl-L-cysteinyl-[protein] + uridine(34) in tRNA + AH2 + ATP = 2-thiouridine(34) in tRNA + L-cysteinyl-[protein] + A + AMP + diphosphate + H(+). In terms of biological role, catalyzes the 2-thiolation of uridine at the wobble position (U34) of tRNA, leading to the formation of s(2)U34. The sequence is that of tRNA-specific 2-thiouridylase MnmA from Listeria monocytogenes serovar 1/2a (strain ATCC BAA-679 / EGD-e).